The primary structure comprises 627 residues: 1-deoxy-D-xylulose-5-phosphate synthase (627 aa).

Residues histidine 72 and 113–115 (GHS) contribute to the thiamine diphosphate site. Aspartate 144 lines the Mg(2+) pocket. Thiamine diphosphate is bound by residues 145–146 (GA), asparagine 173, tyrosine 283, and glutamate 366. Asparagine 173 contacts Mg(2+).

The protein belongs to the transketolase family. DXPS subfamily. In terms of assembly, homodimer. Mg(2+) is required as a cofactor. Thiamine diphosphate serves as cofactor.

The enzyme catalyses D-glyceraldehyde 3-phosphate + pyruvate + H(+) = 1-deoxy-D-xylulose 5-phosphate + CO2. It participates in metabolic intermediate biosynthesis; 1-deoxy-D-xylulose 5-phosphate biosynthesis; 1-deoxy-D-xylulose 5-phosphate from D-glyceraldehyde 3-phosphate and pyruvate: step 1/1. Its function is as follows. Catalyzes the acyloin condensation reaction between C atoms 2 and 3 of pyruvate and glyceraldehyde 3-phosphate to yield 1-deoxy-D-xylulose-5-phosphate (DXP). This Macrococcus caseolyticus (strain JCSC5402) (Macrococcoides caseolyticum) protein is 1-deoxy-D-xylulose-5-phosphate synthase.